A 218-amino-acid chain; its full sequence is Ribonuclease HII (218 aa).

One can recognise an RNase H type-2 domain in the interval 12-206; sequence GRVAGVDEVG…VREALARSAL (195 aa). A divalent metal cation contacts are provided by Asp18, Glu19, and Asp115.

Belongs to the RNase HII family. The cofactor is Mn(2+). Requires Mg(2+) as cofactor.

The protein resides in the cytoplasm. It catalyses the reaction Endonucleolytic cleavage to 5'-phosphomonoester.. Endonuclease that specifically degrades the RNA of RNA-DNA hybrids. This chain is Ribonuclease HII, found in Rhodospirillum rubrum (strain ATCC 11170 / ATH 1.1.1 / DSM 467 / LMG 4362 / NCIMB 8255 / S1).